The sequence spans 137 residues: Nucleoside diphosphate kinase (137 aa).

ATP-binding residues include Lys-9, Phe-57, Arg-85, Thr-91, Arg-102, and Asn-112. His-115 (pros-phosphohistidine intermediate) is an active-site residue.

It belongs to the NDK family. In terms of assembly, homotetramer. Requires Mg(2+) as cofactor.

Its subcellular location is the cytoplasm. The enzyme catalyses a 2'-deoxyribonucleoside 5'-diphosphate + ATP = a 2'-deoxyribonucleoside 5'-triphosphate + ADP. The catalysed reaction is a ribonucleoside 5'-diphosphate + ATP = a ribonucleoside 5'-triphosphate + ADP. In terms of biological role, major role in the synthesis of nucleoside triphosphates other than ATP. The ATP gamma phosphate is transferred to the NDP beta phosphate via a ping-pong mechanism, using a phosphorylated active-site intermediate. In Campylobacter concisus (strain 13826), this protein is Nucleoside diphosphate kinase.